Here is a 298-residue protein sequence, read N- to C-terminus: Cyanophycinase (298 aa).

Catalysis depends on charge relay system residues Ser-155, Glu-173, and His-197.

The protein belongs to the peptidase S51 family.

The catalysed reaction is [L-4-(L-arginin-2-N-yl)aspartate](n) + H2O = [L-4-(L-arginin-2-N-yl)aspartate](n-1) + L-4-(L-arginin-2-N-yl)aspartate. Exopeptidase that catalyzes the hydrolytic cleavage of multi-L-arginyl-poly-L-aspartic acid (cyanophycin; a water-insoluble reserve polymer) into aspartate-arginine dipeptides. This is Cyanophycinase (cphB) from Trichormus variabilis (strain ATCC 29413 / PCC 7937) (Anabaena variabilis).